We begin with the raw amino-acid sequence, 320 residues long: Protein rlx (320 aa).

In terms of biological role, this protein is probably required for relaxation complex formation and plasmid mobilization by conjugative plasmids. This Staphylococcus aureus protein is Protein rlx (rlx).